Here is a 673-residue protein sequence, read N- to C-terminus: Mechanosensitive ion channel protein 2, chloroplastic (673 aa).

A chloroplast-targeting transit peptide spans 1–75 (MALYGTLQLS…SVPCRTTAFR (75 aa)). 5 consecutive transmembrane segments (helical) span residues 107 to 127 (FPFVYKLVPAVALLVFSLWGL), 152 to 172 (YHVMTSYVQPLLLWLGALFIC), 193 to 213 (LNFVRSLSTVLAFAYCLSSLI), 240 to 260 (ALYSAVWVAAVSLFMELLGFS), and 264 to 284 (WLTAGGLGTVLITLAGREILT). The interval 492–673 (KINGEDKSKS…QPNSGASTEP (182 aa)) is disordered. Composition is skewed to basic and acidic residues over residues 510–525 (AEQENKGSNPKSKETS), 564–576 (TPKDTETSGTEKP), and 617–642 (GSKRTLPIEEEIHSPPMETDAKELTG). At S571 the chain carries Phosphoserine. Positions 661 to 673 (SQSQPNSGASTEP) are enriched in polar residues.

Belongs to the MscS (TC 1.A.23) family. As to expression, widely expressed.

Its subcellular location is the plastid. It is found in the chloroplast membrane. Mechanosensitive channel that opens in response to stretch forces in the membrane lipid bilayer. Controls plastid size, shape, and perhaps division during normal plant development by altering ion flux in response to changes in membrane tension. Acts as a component of the chloroplast division machinery. This Arabidopsis thaliana (Mouse-ear cress) protein is Mechanosensitive ion channel protein 2, chloroplastic (MSL2).